The chain runs to 579 residues: Protein alan shepard (579 aa).

The span at 1 to 12 (MHPRYSPAPPPQ) shows a compositional bias: pro residues. The tract at residues 1-66 (MHPRYSPAPP…GSSSSAAAAP (66 aa)) is disordered. Residue Y5 is modified to Phosphotyrosine. Residues 13 to 24 (QQQQMGGPPHQQ) show a composition bias toward low complexity. The segment covering 25 to 35 (QGGGGGGGGSM) has biased composition (gly residues). Positions 37-54 (GPSNAQQLPPQIPRSQNY) are enriched in polar residues. The segment covering 55-66 (SNGSSSSAAAAP) has biased composition (low complexity). 2 positions are modified to phosphotyrosine: Y125 and Y142. Residues 164-225 (PATTTYGQRV…TVQNQNQQGG (62 aa)) are disordered. The span at 178–225 (SPSNTNSSSSSNTGSQSGTLSTSLSNTTNTNTNMGPNGTVQNQNQQGG) shows a compositional bias: low complexity. RRM domains follow at residues 231–304 (TNLY…MAKQ) and 310–389 (TNLY…FADG). The interval 553-579 (MTDSEQASTAASPDEAYTQYPHQAAPK) is disordered.

In terms of biological role, has a role in the perception of gravity. The protein is Protein alan shepard of Drosophila sechellia (Fruit fly).